A 345-amino-acid polypeptide reads, in one-letter code: Anthranilate phosphoribosyltransferase (345 aa).

5-phospho-alpha-D-ribose 1-diphosphate is bound by residues Gly-79, 82 to 83 (GD), Thr-87, 89 to 92 (NVST), 106 to 114 (KHGNRAVSG), and Ser-118. Position 79 (Gly-79) interacts with anthranilate. Residue Ser-91 participates in Mg(2+) binding. Residue Asn-109 coordinates anthranilate. Arg-164 serves as a coordination point for anthranilate. Mg(2+) contacts are provided by Asp-223 and Glu-224.

This sequence belongs to the anthranilate phosphoribosyltransferase family. As to quaternary structure, homodimer. Requires Mg(2+) as cofactor.

It catalyses the reaction N-(5-phospho-beta-D-ribosyl)anthranilate + diphosphate = 5-phospho-alpha-D-ribose 1-diphosphate + anthranilate. It functions in the pathway amino-acid biosynthesis; L-tryptophan biosynthesis; L-tryptophan from chorismate: step 2/5. Catalyzes the transfer of the phosphoribosyl group of 5-phosphorylribose-1-pyrophosphate (PRPP) to anthranilate to yield N-(5'-phosphoribosyl)-anthranilate (PRA). This Saccharolobus islandicus (strain M.16.27) (Sulfolobus islandicus) protein is Anthranilate phosphoribosyltransferase.